The chain runs to 244 residues: Phosphoadenosine 5'-phosphosulfate reductase (244 aa).

Catalysis depends on Cys-239, which acts as the Nucleophile; cysteine thiosulfonate intermediate.

The protein belongs to the PAPS reductase family. CysH subfamily.

It is found in the cytoplasm. The catalysed reaction is [thioredoxin]-disulfide + sulfite + adenosine 3',5'-bisphosphate + 2 H(+) = [thioredoxin]-dithiol + 3'-phosphoadenylyl sulfate. The protein operates within sulfur metabolism; hydrogen sulfide biosynthesis; sulfite from sulfate: step 3/3. Functionally, catalyzes the formation of sulfite from phosphoadenosine 5'-phosphosulfate (PAPS) using thioredoxin as an electron donor. The sequence is that of Phosphoadenosine 5'-phosphosulfate reductase from Salmonella schwarzengrund (strain CVM19633).